The chain runs to 1290 residues: Sorbin and SH3 domain-containing protein 1 (1290 aa).

3 disordered regions span residues 1–211 (MSSE…LSDV), 238–271 (HKLN…SKSE), and 286–313 (TLPL…KKVD). A compositionally biased stretch (low complexity) spans 45-61 (SSSYRGTPSSSPVSPQE). A Phosphothreonine modification is found at Thr51. 3 positions are modified to phosphoserine: Ser55, Ser58, and Ser62. Residues 62–71 (SPKHESKSGL) are compositionally biased toward basic and acidic residues. 2 stretches are compositionally biased toward polar residues: residues 83–95 (LSSS…NAQP) and 123–153 (EVSS…TIVN). The span at 161 to 173 (HNRDPASERRAGE) shows a compositional bias: basic and acidic residues. Phosphoserine is present on residues Asp164 and Asp175. Position 179 is a phosphothreonine (Thr179). 8 positions are modified to phosphoserine: Ser185, Ala194, Ser204, Ser209, Ser254, Ser261, Ser270, and Pro288. Over residues 189–199 (ASERRAKDASR) the composition is skewed to basic and acidic residues. Residues 202-247 (VRSAQDLSDVSTDEVGIPLRNTERSKDWYKTMFKQIHKLNRDDDSD) enclose the SoHo domain. Residues 240–260 (LNRDDDSDVHSPRYSFSDDTK) are compositionally biased toward basic and acidic residues. The span at 299-313 (SPERNDWEPLDKKVD) shows a compositional bias: basic and acidic residues. Tyr325 is subject to Phosphotyrosine; by ABL1. A phosphoserine mark is found at Ser345, Pro346, Tyr357, Ser376, and Ser407. Positions 389-416 (VETVNKSPSANSPQSSAVSPTPDITSEP) are disordered. Over residues 392 to 412 (VNKSPSANSPQSSAVSPTPDI) the composition is skewed to polar residues. Tyr421 bears the Phosphotyrosine; by ABL1 mark. Residues Ser432 and Ser470 each carry the phosphoserine modification. Disordered stretches follow at residues 463–482 (LSGL…RKGG), 588–607 (YDSK…SSRR), 697–739 (SLDF…EMDG), 783–803 (VSND…PKHR), 822–841 (RKHE…SRGD), and 862–972 (PLQQ…SPRH). Residue Thr475 is modified to Phosphothreonine. 2 stretches are compositionally biased toward polar residues: residues 595-606 (TMSLQEYGTSSR) and 704-722 (LSKS…SARS). Position 969 is a phosphoserine (Ser969). SH3 domains lie at 1049-1108 (LEMR…LLPP) and 1123-1184 (LEYG…VLKR). Thr1189 bears the Phosphothreonine mark. Phosphotyrosine is present on residues Tyr1193 and Tyr1198. Residues 1198–1210 (YSSSPSRSATVSP) show a composition bias toward low complexity. Residues 1198–1227 (YSSSPSRSATVSPQQPQAQQRRVTPDRSQP) form a disordered region. Residues Ser1201 and Ser1209 each carry the phosphoserine modification. Positions 1211–1227 (QQPQAQQRRVTPDRSQP) are enriched in polar residues. In terms of domain architecture, SH3 3 spans 1229 to 1290 (LDLCSYQALY…PGNYVKPLYL (62 aa)). Tyr1238 carries the post-translational modification Phosphotyrosine; by ABL1.

As to quaternary structure, interacts (via SH3 domain 2) with PXN. Interacts with the long isoform of AFDN and with VCL. AFDN and VCL bind to SORBS1 in a competitive manner and do not form a ternary complex. Interacts with ABL1, CBL, CBLB and INPPL1/SHIP2 through the third SH3 domain. Interaction with ABL1 occurs only after insulin stimulation while this has no effect on the interaction with INPPL1. Interacts with the insulin receptor but dissociates from it following insulin stimulation. Also interacts with SCA7, PTK2/FAK1 and flotillin. Interacts (via third SH3 domain) with the Ten-1 ICD form of TENM1; the interaction induces the translocation of SORBS1 to the nucleus. Interacts with INSM1. O-glycosylated. In terms of tissue distribution, expressed in all tissues tested: heart, brain, spleen, lung, liver, muscle, kidney and testis. Expressed in 3T3-L1 adipocytes but not in 3T3-L1 fibroblasts.

It localises to the cell junction. The protein localises to the adherens junction. The protein resides in the cell membrane. It is found in the cytoplasm. Its subcellular location is the cytoskeleton. It localises to the focal adhesion. The protein localises to the nucleus. The protein resides in the nucleus matrix. Its function is as follows. Plays a role in tyrosine phosphorylation of CBL by linking CBL to the insulin receptor. Required for insulin-stimulated glucose transport. Involved in formation of actin stress fibers and focal adhesions. The protein is Sorbin and SH3 domain-containing protein 1 of Mus musculus (Mouse).